Reading from the N-terminus, the 332-residue chain is Large ribosomal subunit protein uL29m (332 aa).

A disordered region spans residues 19–40; that stretch reads RFTKPKPKPAKRENVRLPTQRT. Positions 264–327 form a coiled coil; the sequence is TSENTESAIA…IQLQEEDAKN (64 aa).

The protein belongs to the universal ribosomal protein uL29 family. As to quaternary structure, component of the mitochondrial large ribosomal subunit. Mature mitochondrial ribosomes consist of a small (37S) and a large (54S) subunit. The 37S subunit contains at least 33 different proteins and 1 molecule of RNA (15S). The 54S subunit contains at least 45 different proteins and 1 molecule of RNA (21S).

It is found in the mitochondrion. This is Large ribosomal subunit protein uL29m (MRPL4) from Kluyveromyces lactis (strain ATCC 8585 / CBS 2359 / DSM 70799 / NBRC 1267 / NRRL Y-1140 / WM37) (Yeast).